Consider the following 396-residue polypeptide: S-adenosylmethionine synthase 1 (396 aa).

E13 serves as a coordination point for Mg(2+). H19 is an ATP binding site. E47 is a K(+) binding site. Positions 60 and 103 each coordinate L-methionine. ATP is bound by residues 171–173, 239–242, D250, 256–257, A273, K277, and K281; these read DGK, SGRF, and RK. D250 lines the L-methionine pocket. K281 is an L-methionine binding site.

Belongs to the AdoMet synthase family. Homotetramer. Mn(2+) serves as cofactor. Mg(2+) is required as a cofactor. The cofactor is Co(2+). It depends on K(+) as a cofactor.

It is found in the cytoplasm. The enzyme catalyses L-methionine + ATP + H2O = S-adenosyl-L-methionine + phosphate + diphosphate. It participates in amino-acid biosynthesis; S-adenosyl-L-methionine biosynthesis; S-adenosyl-L-methionine from L-methionine: step 1/1. Its function is as follows. Catalyzes the formation of S-adenosylmethionine from methionine and ATP. The reaction comprises two steps that are both catalyzed by the same enzyme: formation of S-adenosylmethionine (AdoMet) and triphosphate, and subsequent hydrolysis of the triphosphate. May be involved in the synthesis of betain in response to abiotic stress such as high salinity. The polypeptide is S-adenosylmethionine synthase 1 (SAMS1) (Beta vulgaris (Sugar beet)).